Reading from the N-terminus, the 84-residue chain is Small ribosomal subunit protein bS20 (84 aa).

Belongs to the bacterial ribosomal protein bS20 family.

Functionally, binds directly to 16S ribosomal RNA. The chain is Small ribosomal subunit protein bS20 from Lacticaseibacillus casei (strain BL23) (Lactobacillus casei).